The primary structure comprises 294 residues: MYB-like transcription factor ODO1 (294 aa).

2 consecutive HTH myb-type domains span residues lysine 9–leucine 61 and arginine 62–leucine 116. DNA-binding regions (H-T-H motif) lie at residues tryptophan 37–leucine 61 and tryptophan 89–isoleucine 112. Disordered regions lie at residues proline 128 to glutamine 152 and threonine 171 to cysteine 191.

Restricted to the petals, with the highest expression in the limb, probably in both epidermal and mesophyll cell layers.

It is found in the nucleus. R2R3 MYB-type transcription factor controlling the production of volatile organic compounds (VOCs), including floral volatile benzenoids and phenylpropanoids (FVBP), in flowers of fragrant cultivars (e.g. cv. Mitchell and cv. V26) by regulating the shikimate pathway, via the activation of several genes (e.g. EPSPS, ADT1, PAL1, CFAT and CCoAOMT1). This scent, mostly produced in the evening and night by the petals, attracts the pollinators (e.g. the night-active hawkmoth pollinator Manduca sexta). Promotes the expression of ABCG1 in petals three hours before the onset of volatile scent emission. Anthocyanins production is not controlled by ODO1 as color and scent are produced at different stages of development. Seems to trigger a negative feed-back loop that represses the expression of EOBI. The chain is MYB-like transcription factor ODO1 from Petunia hybrida (Petunia).